A 125-amino-acid polypeptide reads, in one-letter code: Ribosome-binding factor A (125 aa).

The protein belongs to the RbfA family. In terms of assembly, monomer. Binds 30S ribosomal subunits, but not 50S ribosomal subunits or 70S ribosomes.

The protein resides in the cytoplasm. Its function is as follows. One of several proteins that assist in the late maturation steps of the functional core of the 30S ribosomal subunit. Associates with free 30S ribosomal subunits (but not with 30S subunits that are part of 70S ribosomes or polysomes). Required for efficient processing of 16S rRNA. May interact with the 5'-terminal helix region of 16S rRNA. This chain is Ribosome-binding factor A, found in Xylella fastidiosa (strain M23).